Here is a 2332-residue protein sequence, read N- to C-terminus: Phosphatidylinositol phosphatase PTPRQ (2332 aa).

The signal sequence occupies residues 1–35 (MKKVPIKPEQPEKLRAFNISTHSFSLHWSLPSGHV). 18 consecutive Fibronectin type-III domains span residues 36-99 (ERYQ…TKPG), 100-195 (PPVF…TAES), 199-294 (KVVN…SSST), 350-438 (PPQN…PPDV), 441-539 (AVFD…SHPD), 514-606 (GLYE…SVRT), 610-705 (VPSS…TSED), 710-799 (SPQD…TSET), 804-894 (APEN…TEED), 899-988 (PPQD…TPEG), 993-1093 (PPKD…TDQD), 1098-1190 (FVGN…TEED), 1192-1282 (PETS…TDES), 1287-1380 (PPQN…TQES), 1384-1470 (VVQN…LPET), 1474-1578 (VPTN…TLPG), 1583-1681 (PPEN…TLES), and 1686-1787 (PPNN…IKAP). The Extracellular portion of the chain corresponds to 36 to 1947 (ERYQVDLVPD…GEGLSERTVE (1912 aa)). An N-linked (GlcNAc...) asparagine glycan is attached at asparagine 94. Asparagine 202 and asparagine 394 each carry an N-linked (GlcNAc...) asparagine glycan. Residues asparagine 944, asparagine 1038, asparagine 1080, and asparagine 1101 are each glycosylated (N-linked (GlcNAc...) asparagine). 2 N-linked (GlcNAc...) asparagine glycosylation sites follow: asparagine 1290 and asparagine 1295. Residue asparagine 1844 is glycosylated (N-linked (GlcNAc...) asparagine). Residues 1948-1968 (IILSVTLCILSIILLGTAIFA) form a helical membrane-spanning segment. At 1969 to 2332 (FARIRQKQKE…VELEWEETTM (364 aa)) the chain is on the cytoplasmic side. Positions 2036-2292 (FQEEFSELPK…IFLHQCILDL (257 aa)) constitute a Tyrosine-protein phosphatase domain. Cysteine 2233 acts as the Phosphocysteine intermediate in catalysis.

Belongs to the protein-tyrosine phosphatase family. Receptor class 2A subfamily. Interacts with TPRN. TPRN, CLIC5 and PTPQR form concentric rings at the base of stereocilia and may form a complex. In developing kidney, it localizes to the basal membrane of podocytes, beginning when podocyte progenitors can first be identified in the embryonic kidney (at protein level). Expressed in lung and kidney.

It localises to the cell projection. The protein resides in the stereocilium. Its subcellular location is the apical cell membrane. It is found in the basal cell membrane. It catalyses the reaction a 1,2-diacyl-sn-glycero-3-phospho-(1D-myo-inositol-3,4,5-trisphosphate) + H2O = a 1,2-diacyl-sn-glycero-3-phospho-(1D-myo-inositol-4,5-bisphosphate) + phosphate. It carries out the reaction a 1,2-diacyl-sn-glycero-3-phospho-(1D-myo-inositol-3,4,5-trisphosphate) + H2O = a 1,2-diacyl-sn-glycero-3-phospho-(1D-myo-inositol-3,4-bisphosphate) + phosphate. The enzyme catalyses a 1,2-diacyl-sn-glycero-3-phospho-(1D-myo-inositol-3,5-bisphosphate) + H2O = a 1,2-diacyl-sn-glycero-3-phospho-(1D-myo-inositol-5-phosphate) + phosphate. The catalysed reaction is a 1,2-diacyl-sn-glycero-3-phospho-(1D-myo-inositol-3,5-bisphosphate) + H2O = a 1,2-diacyl-sn-glycero-3-phospho-(1D-myo-inositol-3-phosphate) + phosphate. In terms of biological role, dephosphorylates phosphatidylinositol phosphates, such as phosphatidylinositol 3,4,5-trisphosphate (PIP3) and phosphatidylinositol 3,5-diphosphates, with preference for PIP3. Phosphate can be hydrolyzed from the D3 and D5 positions in the inositol ring. Has low tyrosine-protein phosphatase activity in vitro; however, the relevance of such activity in vivo is unclear. Plays an important role in adipogenesis of mesenchymal stem cells (MSCs). Regulates the phosphorylation state of AKT1 by regulating the levels of PIP3 in MSCs and preadipocyte cells. Required for hair bundle maturation, a process that enables hair cells to detect and transmit sound and balance signals effectively, therefore affecting auditory function. May act by regulating the level of phosphatidylinositol 4,5-bisphosphate (PIP2) level in the basal region of hair bundles. The sequence is that of Phosphatidylinositol phosphatase PTPRQ (PTPRQ) from Homo sapiens (Human).